The chain runs to 301 residues: Bifunctional protein FolD (301 aa).

Residues 166–168 (GKS), serine 191, and isoleucine 232 contribute to the NADP(+) site.

Belongs to the tetrahydrofolate dehydrogenase/cyclohydrolase family. Homodimer.

It catalyses the reaction (6R)-5,10-methylene-5,6,7,8-tetrahydrofolate + NADP(+) = (6R)-5,10-methenyltetrahydrofolate + NADPH. The enzyme catalyses (6R)-5,10-methenyltetrahydrofolate + H2O = (6R)-10-formyltetrahydrofolate + H(+). It participates in one-carbon metabolism; tetrahydrofolate interconversion. Functionally, catalyzes the oxidation of 5,10-methylenetetrahydrofolate to 5,10-methenyltetrahydrofolate and then the hydrolysis of 5,10-methenyltetrahydrofolate to 10-formyltetrahydrofolate. This chain is Bifunctional protein FolD, found in Orientia tsutsugamushi (strain Boryong) (Rickettsia tsutsugamushi).